Consider the following 449-residue polypeptide: Phosphoglucosamine mutase (449 aa).

Ser-101 (phosphoserine intermediate) is an active-site residue. Mg(2+) contacts are provided by Ser-101, Asp-243, Asp-245, and Asp-247. A Phosphoserine modification is found at Ser-101.

It belongs to the phosphohexose mutase family. Mg(2+) is required as a cofactor. Post-translationally, activated by phosphorylation.

The enzyme catalyses alpha-D-glucosamine 1-phosphate = D-glucosamine 6-phosphate. Functionally, catalyzes the conversion of glucosamine-6-phosphate to glucosamine-1-phosphate. The sequence is that of Phosphoglucosamine mutase from Syntrophobacter fumaroxidans (strain DSM 10017 / MPOB).